Reading from the N-terminus, the 210-residue chain is Probable septum site-determining protein MinC (210 aa).

The protein belongs to the MinC family. As to quaternary structure, interacts with MinD and FtsZ.

Functionally, cell division inhibitor that blocks the formation of polar Z ring septums. Rapidly oscillates between the poles of the cell to destabilize FtsZ filaments that have formed before they mature into polar Z rings. Prevents FtsZ polymerization. The sequence is that of Probable septum site-determining protein MinC from Thermotoga sp. (strain RQ2).